We begin with the raw amino-acid sequence, 100 residues long: Urease subunit gamma (100 aa).

This sequence belongs to the urease gamma subunit family. Heterotrimer of UreA (gamma), UreB (beta) and UreC (alpha) subunits. Three heterotrimers associate to form the active enzyme.

The protein localises to the cytoplasm. The enzyme catalyses urea + 2 H2O + H(+) = hydrogencarbonate + 2 NH4(+). The protein operates within nitrogen metabolism; urea degradation; CO(2) and NH(3) from urea (urease route): step 1/1. The sequence is that of Urease subunit gamma from Acinetobacter baylyi (strain ATCC 33305 / BD413 / ADP1).